The following is a 139-amino-acid chain: Natriuretic peptide Mc-NP (139 aa).

Positions 1–25 (MVGLSRLRGGGLLLVLALLPLALDG) are cleaved as a signal peptide. The propeptide occupies 26–75 (KPLEEAPTAPSRIIPFSRPVRKQSQAVLDPMVHPERPAGSGDDGDSRRLE). A disordered region spans residues 45-72 (VRKQSQAVLDPMVHPERPAGSGDDGDSR). The cysteines at positions 86 and 102 are disulfide-linked. Residues 117–139 (IIPFSRPVRKESRAALDRMQQPG) constitute a propeptide that is removed on maturation.

This sequence belongs to the natriuretic peptide family. Expressed by the venom gland.

It localises to the secreted. Functionally, snake venom natriuretic peptide that dose-dependently induces the rapid relaxation of rat aortic strips phenylephrine-precontracted. Acts by stimulating cGMP production in a dose-dependent manner (by probably activating NPR1 and/or NPR2). May also show potent hypotensive effects. A synthetic peptide (AA 77-108, where the Cys-95 is replaced by a Ser) increases sodium excretion and urinary volume in rat kidneys. The sequence is that of Natriuretic peptide Mc-NP from Micrurus corallinus (Brazilian coral snake).